The chain runs to 91 residues: Large ribosomal subunit protein eL31 (91 aa).

The protein belongs to the eukaryotic ribosomal protein eL31 family.

The polypeptide is Large ribosomal subunit protein eL31 (Pyrobaculum neutrophilum (strain DSM 2338 / JCM 9278 / NBRC 100436 / V24Sta) (Thermoproteus neutrophilus)).